Consider the following 75-residue polypeptide: U6-lycotoxin-Ls1g (75 aa).

A signal peptide spans 1-21 (MKLLLFTALVLVVISLIEVEA). Residues 22–25 (ENER) constitute a propeptide that is removed on maturation.

This sequence belongs to the neurotoxin 19 (CSTX) family. 06 (U6-Lctx) subfamily. In terms of processing, contains 4 disulfide bonds. As to expression, expressed by the venom gland.

It is found in the secreted. This chain is U6-lycotoxin-Ls1g, found in Lycosa singoriensis (Wolf spider).